A 178-amino-acid chain; its full sequence is CASP-like protein 4D1 (178 aa).

Ala-2 bears the N-acetylalanine mark. Residues 2–14 (APPPPAPPSVTLR) lie on the Cytoplasmic side of the membrane. Residues 15–35 (TVLLLLRVLTAAFLLITVVLI) form a helical membrane-spanning segment. Over 36-60 (STNTVTLEISSTSIKLPFNDVYAYR) the chain is Extracellular. The chain crosses the membrane as a helical span at residues 61 to 81 (YMLSAAVIGLVYAVVQLFLTI). At 82-97 (SQFATGKTHPLTYQFD) the chain is on the cytoplasmic side. The chain crosses the membrane as a helical span at residues 98-118 (FYGDKVISYLLATGSAAGFGV). Residues 119-149 (SKDLKDTYIALIEFDSTDPVDKFFSKGYASA) lie on the Extracellular side of the membrane. A helical membrane pass occupies residues 150-170 (SLLLFAFVSLAVLSVFSSLAL). Residues 171 to 178 (SKRPVPVS) are Cytoplasmic-facing.

This sequence belongs to the Casparian strip membrane proteins (CASP) family. As to quaternary structure, homodimer and heterodimers. Expressed in the root epidermis.

The protein resides in the cell membrane. In Arabidopsis thaliana (Mouse-ear cress), this protein is CASP-like protein 4D1.